The following is a 504-amino-acid chain: Glycerol kinase (504 aa).

Thr14 contacts ADP. Positions 14, 15, and 16 each coordinate ATP. Residue Thr14 coordinates sn-glycerol 3-phosphate. Arg18 provides a ligand contact to ADP. Sn-glycerol 3-phosphate-binding residues include Arg84, Glu85, and Tyr136. Residues Arg84, Glu85, and Tyr136 each contribute to the glycerol site. The residue at position 232 (His232) is a Phosphohistidine; by HPr. Asp246 contributes to the sn-glycerol 3-phosphate binding site. Asp246 and Gln247 together coordinate glycerol. Residues Thr268 and Gly311 each contribute to the ADP site. Residues Thr268, Gly311, Gln315, and Gly412 each contribute to the ATP site. ADP-binding residues include Gly412 and Asn416.

The protein belongs to the FGGY kinase family. In terms of assembly, homotetramer and homodimer (in equilibrium). In terms of processing, the phosphoenolpyruvate-dependent sugar phosphotransferase system (PTS), including enzyme I, and histidine-containing protein (HPr) are required for the phosphorylation, which leads to the activation of the enzyme.

It carries out the reaction glycerol + ATP = sn-glycerol 3-phosphate + ADP + H(+). Its pathway is polyol metabolism; glycerol degradation via glycerol kinase pathway; sn-glycerol 3-phosphate from glycerol: step 1/1. Activated by phosphorylation and inhibited by fructose 1,6-bisphosphate (FBP). Its function is as follows. Key enzyme in the regulation of glycerol uptake and metabolism. Catalyzes the phosphorylation of glycerol to yield sn-glycerol 3-phosphate. The chain is Glycerol kinase from Streptococcus pyogenes serotype M6 (strain ATCC BAA-946 / MGAS10394).